The primary structure comprises 115 residues: U3-lycotoxin-Ls1k (115 aa).

The N-terminal stretch at 1–20 is a signal peptide; that stretch reads MKFELLFGVLLVTLFSYSSA. The propeptide occupies 21–44; it reads EMLDDFDQADEDELLSLIEKEEAR. Intrachain disulfides connect C48/C63, C55/C72, C62/C87, and C74/C85.

Belongs to the neurotoxin 19 (CSTX) family. 01 subfamily. Expressed by the venom gland.

It is found in the secreted. This chain is U3-lycotoxin-Ls1k, found in Lycosa singoriensis (Wolf spider).